Here is a 1259-residue protein sequence, read N- to C-terminus: Trafficking protein particle complex II-specific subunit 130 homolog (1259 aa).

A2 is subject to N-acetylalanine. Residues 479–526 (GNIPEMFDGRPSFTEGSGLEASPRTPSSLKVQAPPMSRTNSSPGNFES) are disordered.

This sequence belongs to the TMEM1 family. As to quaternary structure, part of the multisubunit TRAPP (transport protein particle) II complex composed of BET3, BET5, TRS20, TRS23, TRS31, TRS33, TRS65, TRS85, TRS120 and TRS130.

Its subcellular location is the golgi apparatus. The protein resides in the trans-Golgi network. It localises to the early endosome. Specific subunit of the TRAPP II complex, a highly conserved vesicle tethering complex that is required for the proper transport of proteins in post-Golgi trafficking pathways to the growing cell plate in mitotic active cells. Required for the polarized and selective transport of PIN2, but not PIN1, to the plasma membrane. Not required for ER-to-Golgi as well as biosynthetic and endocytic vacuolar transport. In Arabidopsis thaliana (Mouse-ear cress), this protein is Trafficking protein particle complex II-specific subunit 130 homolog.